We begin with the raw amino-acid sequence, 191 residues long: Calcium-activated potassium channel subunit beta-1 (191 aa).

Over 2-18 (GKKLVMAQRRGETRALC) the chain is Cytoplasmic. A helical transmembrane segment spans residues 19–39 (LGVAMVVGAVITYYILGTTVL). The Extracellular segment spans residues 40 to 157 (PLYQKSVWTQ…YRRLYGPQSL (118 aa)). N-linked (GlcNAc...) asparagine glycans are attached at residues Asn-80 and Asn-142. The chain crosses the membrane as a helical span at residues 158-178 (LFSLFWPTFLLTGGLLIIVMV). At 179 to 191 (KINQSLSILAAQR) the chain is on the cytoplasmic side.

This sequence belongs to the KCNMB (TC 8.A.14.1) family. KCNMB1 subfamily. Interacts with KCNMA1 tetramer. There are probably 4 molecules of KCMNB1 per KCNMA1 tetramer. Post-translationally, N-glycosylated.

It localises to the membrane. In terms of biological role, regulatory subunit of the calcium activated potassium KCNMA1 (maxiK) channel. Modulates the calcium sensitivity and gating kinetics of KCNMA1, thereby contributing to KCNMA1 channel diversity. Increases the apparent Ca(2+)/voltage sensitivity of the KCNMA1 channel. It also modifies KCNMA1 channel kinetics and alters its pharmacological properties. It slows down the activation and the deactivation kinetics of the channel. Acts as a negative regulator of smooth muscle contraction by enhancing the calcium sensitivity to KCNMA1. Its presence is also a requirement for internal binding of the KCNMA1 channel opener dehydrosoyasaponin I (DHS-1) triterpene glycoside and for external binding of the agonist hormone 17-beta-estradiol (E2). Increases the binding activity of charybdotoxin (CTX) toxin to KCNMA1 peptide blocker by increasing the CTX association rate and decreasing the dissociation rate. This is Calcium-activated potassium channel subunit beta-1 (KCNMB1) from Bos taurus (Bovine).